The sequence spans 266 residues: Auxin-responsive protein IAA21 (266 aa).

The short motif at 24 to 28 is the EAR-like (transcriptional repression) element; the sequence is LRLGL. The segment at 27-50 is disordered; the sequence is GLPGTAEEAESEGGGGGGTDAAPL. Residues 146 to 248 enclose the PB1 domain; that stretch reads CLYVKVSMDG…SCRRLRIMKG (103 aa).

The protein belongs to the Aux/IAA family. As to quaternary structure, homodimers and heterodimers. As to expression, highly expressed in flowers. Expressed in roots and seedlings.

It localises to the nucleus. Its function is as follows. Aux/IAA proteins are short-lived transcriptional factors that function as repressors of early auxin response genes at low auxin concentrations. In Oryza sativa subsp. japonica (Rice), this protein is Auxin-responsive protein IAA21 (IAA21).